We begin with the raw amino-acid sequence, 361 residues long: D-amino-acid oxidase (361 aa).

Positions 1–22 are cleaved as a signal peptide; sequence MSNTIVVVGAGVIGLTSALLLS. The FAD site is built by Ala10, Ile13, Lys34, His35, Ala45, Ser46, Gly50, and Asn52. N-linked (GlcNAc...) asparagine glycosylation is found at Asn193 and Asn222. (R)-lactate is bound by residues Tyr242, Tyr258, and Arg305. Positions 242, 258, and 305 each coordinate anthranilate. Positions 305, 332, 335, 336, and 337 each coordinate FAD. Positions 359 to 361 match the Microbody targeting signal motif; that stretch reads SKL.

It belongs to the DAMOX/DASOX family. The cofactor is FAD. In terms of processing, the N-terminus is blocked.

It localises to the peroxisome matrix. The enzyme catalyses a D-alpha-amino acid + O2 + H2O = a 2-oxocarboxylate + H2O2 + NH4(+). In terms of biological role, catalyzes the oxidative deamination of D-amino acids with broad substrate specificity. Enables the organism to utilize D-amino acids as a source of nutrients. The chain is D-amino-acid oxidase from Fusarium vanettenii (Neocosmospora pisi).